The following is a 536-amino-acid chain: Plasmepsin V (536 aa).

Positions 1–34 are cleaved as a signal peptide; that stretch reads MVGASLGPPGRGSLSRLIRLVICVLTLCALSVQG. At 35–492 the chain is on the lumenal side; it reads RSESTEGHSK…RKDNIFLKIP (458 aa). In terms of domain architecture, Peptidase A1 spans 62–462; that stretch reads YFLDIDIGTP…DIQKNRIGFV (401 aa). Asp80 is a catalytic residue. 7 disulfides stabilise this stretch: Cys90/Cys172, Cys93/Cys96, Cys117/Cys128, Cys122/Cys133, Cys220/Cys466, Cys337/Cys382, and Cys391/Cys427. Positions 244 to 258 are enriched in low complexity; sequence SKSVSGQGSGPVSES. The interval 244–264 is disordered; that stretch reads SKSVSGQGSGPVSESLSESGE. The active site involves Asp313. Residues 493 to 513 traverse the membrane as a helical segment; the sequence is FFYLYSLFVVFALSVLLSLVF. Over 514–536 the chain is Cytoplasmic; sequence YVRRLYHMEYSPLPSEGKAPADA.

It belongs to the peptidase A1 family. In terms of assembly, component of a complex composed of SPC25 and PMV; the interaction is mediated via the transmembrane domains. The complex interacts with the SEC61 channel-forming translocon complex and is involved in the recognition and import of PEXEL motif-containing proteins into the ER for subsequent export. In terms of processing, it is not clear if the zymogen has a cleavable propeptide. Cleavage of the putative propeptide is dispensable for catalytic activity.

It is found in the endoplasmic reticulum membrane. Its activity is regulated as follows. Inhibited by peptidomimetic inhibitors such as WEHI-842. In terms of biological role, during the asexual blood stage, plays an essential role in the export of several proteins into the host erythrocytes by cleaving the pentameric localization motif RxLxE/Q/D (termed Plasmodium export element (PEXEL)) located downstream of the N-terminal secretory signal sequence. Specifically, cleaves after the leucine residue in the RxLxE/Q/D (or RxLxxE) motif of exported proteins including EMP1. Also, by regulating protein export, plays an essential role in gametocyte development and thus parasite transmission to the mosquito vector. This is Plasmepsin V from Plasmodium vivax (strain Salvador I).